Here is a 460-residue protein sequence, read N- to C-terminus: UDP-N-acetylmuramoylalanine--D-glutamate ligase (460 aa).

Position 120–126 (120–126 (GSNGKTT)) interacts with ATP.

This sequence belongs to the MurCDEF family.

The protein resides in the cytoplasm. It carries out the reaction UDP-N-acetyl-alpha-D-muramoyl-L-alanine + D-glutamate + ATP = UDP-N-acetyl-alpha-D-muramoyl-L-alanyl-D-glutamate + ADP + phosphate + H(+). It participates in cell wall biogenesis; peptidoglycan biosynthesis. Functionally, cell wall formation. Catalyzes the addition of glutamate to the nucleotide precursor UDP-N-acetylmuramoyl-L-alanine (UMA). This Lactobacillus gasseri (strain ATCC 33323 / DSM 20243 / BCRC 14619 / CIP 102991 / JCM 1131 / KCTC 3163 / NCIMB 11718 / NCTC 13722 / AM63) protein is UDP-N-acetylmuramoylalanine--D-glutamate ligase.